The primary structure comprises 163 residues: Antimicrobial peptide 2 (163 aa).

The signal sequence occupies residues 1–22; that stretch reads MLNMKSFALLMLFATLVGVTIA. 2 Chitin-binding type-1 domains span residues 26-66 and 69-107; these read NGKC…EIEP and AGQC…SCLP. 3 disulfide bridges follow: Cys-29–Cys-42, Cys-36–Cys-48, and Cys-41–Cys-55. Residues 58 to 67 constitute a propeptide that is removed on maturation; the sequence is NTPLSEIEPT. 4 cysteine pairs are disulfide-bonded: Cys-72-Cys-83, Cys-77-Cys-89, Cys-82-Cys-96, and Cys-101-Cys-105. Positions 100–163 are excised as a propeptide; it reads MCQGSCLPDM…QVEPAVTKAP (64 aa).

As to expression, expressed in roots, flowers, stem and leaves.

Its function is as follows. Antimicrobial peptide. The protein is Antimicrobial peptide 2 of Stellaria media (Common chickweed).